Reading from the N-terminus, the 952-residue chain is Histone deacetylase 7 (952 aa).

Transcription repression regions lie at residues 1–268 (MDLR…DSDR) and 218–546 (GPNP…EHAG). The tract at residues 49 to 149 (SMDTPMPELQ…LPSDPPEHFP (101 aa)) is interaction with MEF2A. Residue Ser109 is modified to Phosphoserine. Disordered regions lie at residues 130-224 (LSSF…PILG) and 261-283 (PARA…ILGS). Ser155 carries the phosphoserine; by MARK2, MARK3 and PKD/PRKD1 modification. Over residues 167 to 181 (KSLERRKNPLLRKES) the composition is skewed to basic and acidic residues. Ser181 carries the post-translational modification Phosphoserine; by PKD/PRKD2. The span at 197–212 (SSPSSSSTPASGCSSP) shows a compositional bias: low complexity. A Phosphoserine modification is found at Ser283. A Phosphothreonine modification is found at Thr286. Disordered regions lie at residues 349-377 (LHWP…MQPR), 389-441 (KRSA…GPAP), and 460-510 (LPRG…SSSE). Ser358 bears the Phosphoserine; by PKD/PRKD1 mark. Residues 360–374 (PLPPSATAPPPPGPM) are compositionally biased toward pro residues. 5 positions are modified to phosphoserine: Ser364, Ser405, Ser486, Ser487, and Ser507. Positions 482-503 (SRAQSSPAAPASLSAPEPASQA) are enriched in low complexity. Positions 512–865 (PARTLPFTTG…VAALLGNRVD (354 aa)) are histone deacetylase. Residues Cys533, Cys535, and His541 each coordinate Zn(2+). Ser595 carries the phosphoserine modification. Cys618 contributes to the Zn(2+) binding site. His670 is a catalytic residue. The tract at residues 877 to 952 (NLNAIRSLEA…LVEEEEPMNL (76 aa)) is interaction with SIN3A. The short motif at 917-952 (KEEVEAVTALASLSVGILAEDRPSEQLVEEEEPMNL) is the Nuclear export signal element.

The protein belongs to the histone deacetylase family. HD type 2 subfamily. Interacts with HDAC1, HDAC2, HDAC3, HDAC4, HDAC5, NCOR1, NCOR2, SIN3A, SIN3B, RBBP4, RBBP7, MTA1L1, SAP30 and MBD3. Interacts with KAT5 and EDNRA. Interacts with the 14-3-3 protein YWHAE, MEF2A, MEF2B and MEF2C. Interacts with ZMYND15. Interacts with KDM5B. Interacts with PML. Interacts with FOXP3. Interacts with RARA. In terms of processing, may be phosphorylated by CaMK1. Phosphorylated by the PKC kinases PKN1 and PKN2, impairing nuclear import. Phosphorylation at Ser-155 by MARK2, MARK3 and PRKD1 promotes interaction with 14-3-3 proteins and export from the nucleus. Phosphorylation at Ser-155 is a prerequisite for phosphorylation at Ser-181.

The protein localises to the nucleus. It localises to the cytoplasm. The enzyme catalyses N(6)-acetyl-L-lysyl-[histone] + H2O = L-lysyl-[histone] + acetate. It carries out the reaction N(6)-acetyl-L-lysyl-[protein] + H2O = L-lysyl-[protein] + acetate. Its function is as follows. Responsible for the deacetylation of lysine residues on the N-terminal part of the core histones (H2A, H2B, H3 and H4). Histone deacetylation gives a tag for epigenetic repression and plays an important role in transcriptional regulation, cell cycle progression and developmental events. Histone deacetylases act via the formation of large multiprotein complexes. Involved in muscle maturation by repressing transcription of myocyte enhancer factors such as MEF2A, MEF2B and MEF2C. During muscle differentiation, it shuttles into the cytoplasm, allowing the expression of myocyte enhancer factors. May be involved in Epstein-Barr virus (EBV) latency, possibly by repressing the viral BZLF1 gene. Positively regulates the transcriptional repressor activity of FOXP3. Serves as a corepressor of RARA, causing its deacetylation and inhibition of RARE DNA element binding. In association with RARA, plays a role in the repression of microRNA-10a and thereby in the inflammatory response. Also acetylates non-histone proteins, such as ALKBH5. This chain is Histone deacetylase 7 (HDAC7), found in Homo sapiens (Human).